The primary structure comprises 649 residues: 1-deoxy-D-xylulose-5-phosphate synthase (649 aa).

Residues His73 and Ser114 to Ala116 each bind thiamine diphosphate. Asp145 is a Mg(2+) binding site. Thiamine diphosphate-binding positions include Gly146–Ala147, Asn175, Tyr286, and Glu367. Asn175 lines the Mg(2+) pocket.

This sequence belongs to the transketolase family. DXPS subfamily. As to quaternary structure, homodimer. Requires Mg(2+) as cofactor. It depends on thiamine diphosphate as a cofactor.

It carries out the reaction D-glyceraldehyde 3-phosphate + pyruvate + H(+) = 1-deoxy-D-xylulose 5-phosphate + CO2. The protein operates within metabolic intermediate biosynthesis; 1-deoxy-D-xylulose 5-phosphate biosynthesis; 1-deoxy-D-xylulose 5-phosphate from D-glyceraldehyde 3-phosphate and pyruvate: step 1/1. Functionally, catalyzes the acyloin condensation reaction between C atoms 2 and 3 of pyruvate and glyceraldehyde 3-phosphate to yield 1-deoxy-D-xylulose-5-phosphate (DXP). This is 1-deoxy-D-xylulose-5-phosphate synthase from Rhodococcus jostii (strain RHA1).